The chain runs to 355 residues: UDP-N-acetylglucosamine--N-acetylmuramyl-(pentapeptide) pyrophosphoryl-undecaprenol N-acetylglucosamine transferase (355 aa).

UDP-N-acetyl-alpha-D-glucosamine is bound by residues threonine 15 to glycine 17, asparagine 127, arginine 163, serine 191, isoleucine 244, alanine 263 to glutamate 268, and glutamine 288.

Belongs to the glycosyltransferase 28 family. MurG subfamily.

The protein localises to the cell inner membrane. It catalyses the reaction di-trans,octa-cis-undecaprenyl diphospho-N-acetyl-alpha-D-muramoyl-L-alanyl-D-glutamyl-meso-2,6-diaminopimeloyl-D-alanyl-D-alanine + UDP-N-acetyl-alpha-D-glucosamine = di-trans,octa-cis-undecaprenyl diphospho-[N-acetyl-alpha-D-glucosaminyl-(1-&gt;4)]-N-acetyl-alpha-D-muramoyl-L-alanyl-D-glutamyl-meso-2,6-diaminopimeloyl-D-alanyl-D-alanine + UDP + H(+). It functions in the pathway cell wall biogenesis; peptidoglycan biosynthesis. Its function is as follows. Cell wall formation. Catalyzes the transfer of a GlcNAc subunit on undecaprenyl-pyrophosphoryl-MurNAc-pentapeptide (lipid intermediate I) to form undecaprenyl-pyrophosphoryl-MurNAc-(pentapeptide)GlcNAc (lipid intermediate II). This Photorhabdus laumondii subsp. laumondii (strain DSM 15139 / CIP 105565 / TT01) (Photorhabdus luminescens subsp. laumondii) protein is UDP-N-acetylglucosamine--N-acetylmuramyl-(pentapeptide) pyrophosphoryl-undecaprenol N-acetylglucosamine transferase.